A 156-amino-acid polypeptide reads, in one-letter code: ATP synthase subunit b (156 aa).

Residues 11–31 (AIAFAVFVWFCMKYVWPPLLA) traverse the membrane as a helical segment.

It belongs to the ATPase B chain family. F-type ATPases have 2 components, F(1) - the catalytic core - and F(0) - the membrane proton channel. F(1) has five subunits: alpha(3), beta(3), gamma(1), delta(1), epsilon(1). F(0) has three main subunits: a(1), b(2) and c(10-14). The alpha and beta chains form an alternating ring which encloses part of the gamma chain. F(1) is attached to F(0) by a central stalk formed by the gamma and epsilon chains, while a peripheral stalk is formed by the delta and b chains.

The protein localises to the cell inner membrane. In terms of biological role, f(1)F(0) ATP synthase produces ATP from ADP in the presence of a proton or sodium gradient. F-type ATPases consist of two structural domains, F(1) containing the extramembraneous catalytic core and F(0) containing the membrane proton channel, linked together by a central stalk and a peripheral stalk. During catalysis, ATP synthesis in the catalytic domain of F(1) is coupled via a rotary mechanism of the central stalk subunits to proton translocation. Functionally, component of the F(0) channel, it forms part of the peripheral stalk, linking F(1) to F(0). In Psychromonas ingrahamii (strain DSM 17664 / CCUG 51855 / 37), this protein is ATP synthase subunit b.